Here is a 105-residue protein sequence, read N- to C-terminus: MAQSQNIRIRLKAFDYRVLDTSTQEIVNTAKRTGASVRGPIPLPNKIEKFTVLRGPHVDKKSRDQFEIRTHKRLLDIVDPTPQTVDALMKLDLAAGVDVEIKLQS.

This sequence belongs to the universal ribosomal protein uS10 family. As to quaternary structure, part of the 30S ribosomal subunit.

Its function is as follows. Involved in the binding of tRNA to the ribosomes. The polypeptide is Small ribosomal subunit protein uS10 (Roseobacter denitrificans (strain ATCC 33942 / OCh 114) (Erythrobacter sp. (strain OCh 114))).